The chain runs to 391 residues: Polyisoprenyl-teichoic acid--peptidoglycan teichoic acid transferase TagV (391 aa).

Topologically, residues Met-1–Arg-23 are cytoplasmic. Residues Ile-24–Tyr-44 form a helical; Signal-anchor for type II membrane protein membrane-spanning segment. Over Lys-45–Tyr-391 the chain is Extracellular. Positions Asp-329–Tyr-391 are disordered. Over residues Asp-333–Tyr-391 the composition is skewed to low complexity.

It belongs to the LytR/CpsA/Psr (LCP) family.

It localises to the cell membrane. It functions in the pathway cell wall biogenesis. May catalyze the final step in cell wall teichoic acid biosynthesis, the transfer of the anionic cell wall polymers (APs) from their lipid-linked precursor to the cell wall peptidoglycan (PG). This chain is Polyisoprenyl-teichoic acid--peptidoglycan teichoic acid transferase TagV, found in Bacillus subtilis (strain 168).